The primary structure comprises 384 residues: uncharacterized protein (384 aa).

The next 12 helical transmembrane spans lie at 22-42 (LAFF…PFAK), 52-72 (LGLL…LTGV), 81-101 (AVIL…VLMN), 106-126 (MAIA…AMNI), 143-163 (FHGL…ALLW), 164-184 (LGLN…ILLL), 202-222 (LFVF…VMFL), 240-260 (GMSP…MTLG), 276-296 (VLLG…SIDS), 299-319 (AAII…PILF), 327-347 (VMPA…GILA), and 352-372 (IGFI…ALLL).

This sequence belongs to the major facilitator superfamily.

It localises to the membrane. This is an uncharacterized protein from Yersinia pestis.